Here is a 783-residue protein sequence, read N- to C-terminus: Cadherin-5 (783 aa).

A signal peptide spans 1 to 25 (MQALVMLLATGATYYLGLLAAAAAA). A propeptide spanning residues 26–45 (VNPGRPNTPGSLPAHRRQKR) is cleaved from the precursor. 5 Cadherin domains span residues 44-149 (KRDW…WPVF), 150-256 (THRV…FPIF), 257-371 (TQNR…PPIF), 372-478 (QQPF…APEF), and 478-585 (FAKP…GEFT). Residues 46–599 (DWIWNQMHID…AAAQVGISIQ (554 aa)) are Extracellular-facing. 2 residues coordinate Ca(2+): Glu56 and Glu57. N-linked (GlcNAc...) asparagine glycosylation occurs at Asn59. Residues Asp107, Glu109, Asp141, Val142, Asn143, Asp144, and Asn145 each coordinate Ca(2+). N-linked (GlcNAc...) asparagine glycosylation is present at Asn155. Residues Asp175, Asp177, His184, and Asp229 each contribute to the Ca(2+) site. N-linked (GlcNAc...) asparagine glycans are attached at residues Asn361, Asn441, and Asn523. Residues 600-620 (ALVAIFLCILTFTVITLLIIL) form a helical membrane-spanning segment. The required for interaction with PALS1 stretch occupies residues 621–660 (RRRLRKQARAHGKSVPEIHEQLVTYDEEGGGEMDTTSYDV). At 621 to 783 (RRRLRKQARA…GSDPQEELVY (163 aa)) the chain is on the cytoplasmic side.

Part of a complex composed of AMOTL2, MAGI1 and CDH5, within the complex AMOTL2 acts as a scaffold protein for the interaction of MAGI1 with CDH5. The complex is required for coupling actin fibers to cell junctions in endothelial cells. Within the complex AMOTL2 (via its N-terminus) interacts with CDH5. Interacts (via cadherin 5 domain) with PTPRB. Interacts with TRPC4. Interacts with KRIT1. Interacts with PARD3. Interacts with RTN4 (isoform B). Interacts with PALS1; the interaction promotes PALS1 localization to cell junctions and is required for CDH5-mediated vascular lumen formation and endothelial cell. Interacts with CTNND1/p120-catenin; the interaction controls CADH5 endocytosis. Phosphorylated on tyrosine residues by KDR/VEGFR-2. Dephosphorylated by PTPRB. In terms of processing, O-glycosylated.

The protein resides in the cell junction. The protein localises to the adherens junction. It localises to the cell membrane. Its subcellular location is the cytoplasm. Functionally, cadherins are calcium-dependent cell adhesion proteins. They preferentially interact with themselves in a homophilic manner in connecting cells; cadherins may thus contribute to the sorting of heterogeneous cell types. This cadherin may play a important role in endothelial cell biology through control of the cohesion and organization of the intercellular junctions. It associates with alpha-catenin forming a link to the cytoskeleton. Plays a role in coupling actin fibers to cell junctions in endothelial cells, via acting as a cell junctional complex anchor for AMOTL2 and MAGI1. Acts in concert with KRIT1 and PALS1 to establish and maintain correct endothelial cell polarity and vascular lumen. These effects are mediated by recruitment and activation of the Par polarity complex and RAP1B. Required for activation of PRKCZ and for localization of phosphorylated PRKCZ, PARD3, TIAM1 and RAP1B to the cell junction. Associates with CTNND1/p120-catenin to control CADH5 endocytosis. The chain is Cadherin-5 from Bos taurus (Bovine).